A 416-amino-acid chain; its full sequence is Tyrosine--tRNA ligase (416 aa).

Residue Tyr40 participates in L-tyrosine binding. Positions 45–54 (ATAKSLHVGS) match the 'HIGH' region motif. The L-tyrosine site is built by Tyr177 and Gln181. The 'KMSKS' region signature appears at 237 to 241 (KMGKS). An ATP-binding site is contributed by Lys240. Positions 351–415 (ISIVQLIVKS…GKKRHAMVQL (65 aa)) constitute an S4 RNA-binding domain.

The protein belongs to the class-I aminoacyl-tRNA synthetase family. TyrS type 1 subfamily. In terms of assembly, homodimer.

The protein localises to the cytoplasm. The catalysed reaction is tRNA(Tyr) + L-tyrosine + ATP = L-tyrosyl-tRNA(Tyr) + AMP + diphosphate + H(+). Catalyzes the attachment of tyrosine to tRNA(Tyr) in a two-step reaction: tyrosine is first activated by ATP to form Tyr-AMP and then transferred to the acceptor end of tRNA(Tyr). This chain is Tyrosine--tRNA ligase, found in Roseobacter denitrificans (strain ATCC 33942 / OCh 114) (Erythrobacter sp. (strain OCh 114)).